Here is a 678-residue protein sequence, read N- to C-terminus: Glutamic acid-rich protein (678 aa).

An N-terminal signal peptide occupies residues 1-25; that stretch reads MNVLFLSYNICILFFVVCTLNFSTK. Residues 56 to 79 are compositionally biased toward basic and acidic residues; that stretch reads EKNKDDNSKSETLLKEEKDEKDDV. Disordered regions lie at residues 56 to 194, 225 to 445, and 520 to 678; these read EKNK…NLDE, ISSV…VVKN, and VVPR…NAKI. Residues 80 to 107 are compositionally biased toward polar residues; the sequence is PTTSNDNLKNAHNNNEISSSTDPTNIIN. The span at 109–120 shows a compositional bias: basic and acidic residues; it reads NDKDNENSVDKK. 15 consecutive repeat copies span residues 120–122, 123–125, 126–128, 129–131, 132–134, 135–137, 138–140, 141–143, 144–146, 147–149, 150–152, 153–155, 156–158, 159–161, and 162–164. The 15 X 3 AA tandem repeats of K-K-[DEHK] stretch occupies residues 120 to 164; it reads KKDKKEKKHKKDKKEKKEKKDKKEKKDKKEKKHKKEKKHKKDKKK. Basic residues predominate over residues 121–165; sequence KDKKEKKHKKDKKEKKEKKDKKEKKDKKEKKHKKEKKHKKDKKKK. Basic and acidic residues-rich tracts occupy residues 231–329 and 371–411; these read TSND…EEKE and PEEH…EHKS. Tandem repeats lie at residues 372-376, 377-381, 382-386, 387-391, 392-396, 397-401, 402-406, 407-411, 412-416, 417-421, 422-426, 427-431, 432-436, and 437-441. Residues 372–416 are 9 X 5 AA tandem repeats of [EGK]-E-H-K-[EKS]; the sequence is EEHKEGEHKEEEHKEGEHKEGEHKEEEHKEEEHKKEEHKSKEHKS. A compositionally biased stretch (basic residues) spans 412 to 443; that stretch reads KEHKSKGKKDKGKKDKGKHKKAKKEKVKKHVV. The tract at residues 417-441 is 5 X 5 AA tandem repeats of K-[GAV]-K-[KH]-[DKEH]; sequence KGKKDKGKKDKGKHKKAKKEKVKKH. The segment covering 532–565 has biased composition (basic and acidic residues); the sequence is AKIEEAELQKQKHVDKEEDKKEESKEVQEESKEV. Over residues 566 to 663 the composition is skewed to acidic residues; that stretch reads QEDEEEVEED…EEEEEEEEEE (98 aa). Basic residues predominate over residues 667–678; the sequence is KIKRNLRKNAKI.

This chain is Glutamic acid-rich protein (GARP), found in Plasmodium falciparum (isolate FC27 / Papua New Guinea).